The sequence spans 584 residues: A-type ATP synthase subunit A (584 aa).

An ATP-binding site is contributed by 233 to 240 (GPFGSGKT).

The protein belongs to the ATPase alpha/beta chains family. In terms of assembly, has multiple subunits with at least A(3), B(3), C, D, E, F, H, I and proteolipid K(x).

Its subcellular location is the cell membrane. It catalyses the reaction ATP + H2O + 4 H(+)(in) = ADP + phosphate + 5 H(+)(out). Its function is as follows. Component of the A-type ATP synthase that produces ATP from ADP in the presence of a proton gradient across the membrane. The A chain is the catalytic subunit. The polypeptide is A-type ATP synthase subunit A (Methanobrevibacter smithii (strain ATCC 35061 / DSM 861 / OCM 144 / PS)).